We begin with the raw amino-acid sequence, 767 residues long: Cadherin-5 (767 aa).

A signal peptide spans Met1–Gly29. Residues Val30–Arg51 constitute a propeptide that is removed on maturation. Residues Val30 to Ser593 lie on the Extracellular side of the membrane. 4 residues coordinate Ca(2+): Glu62, Glu63, Asp113, and Glu115. 5 Cadherin domains span residues Arg86–Phe155, Phe155–Phe261, Lys262–Phe373, Asn374–Leu475, and Leu475–Tyr581. Asn121 carries an N-linked (GlcNAc...) asparagine glycan. The Ca(2+) site is built by Asp147, Ile148, Asn149, Asp150, Asn151, Asp180, and Asp182. N-linked (GlcNAc...) asparagine glycosylation occurs at Asn197. Residue Asp233 coordinates Ca(2+). 3 N-linked (GlcNAc...) asparagine glycosylation sites follow: Asn374, Asn477, and Asn518. The chain crosses the membrane as a helical span at residues Ala594 to Leu614. Over Arg615–Tyr767 the chain is Cytoplasmic.

The protein localises to the cell membrane. It is found in the cell junction. Its subcellular location is the adherens junction. Its function is as follows. Cadherins are calcium-dependent cell adhesion proteins. They preferentially interact with themselves in a homophilic manner in connecting cells; cadherins may thus contribute to the sorting of heterogeneous cell types. Required for embryonic cardiac looping and heart chamber development, via promotion of cell-cell junction formation and subsequent attachment between the endothelial and myocardial layers of the heart. Required for the directional migration and delamination of endothelial cell monolayers, by which common cardinal veins form via the lumen ensheathment mechanism of vessel development as they migrate and connect with the heart inflow tract. Required for the formation of filopodia extensions (sprouts) at the initiation of intersegmental vessel development, by acting (via its C-terminus) to facilitate anchoring of the actin cytoskeleton to cell junctions in endothelial cells. Then positively regulates dorsal migration of stalk cells and sprout outgrowth towards the dorsal longitudinal anastomotic vessels (DLAV) via endothelial cell elongation. Following contact with the DLAV, required for intersegmental vessel lumen formation, potentially via facilitating the formation and/or extension of endothelial cell tight junctions that are required during tubulogenesis. This Danio rerio (Zebrafish) protein is Cadherin-5.